A 975-amino-acid chain; its full sequence is Leucine-zipper-like transcriptional regulator 1 homolog (975 aa).

Residues 16-32 (RGGGGGGCGGGGAGGSA) are compositionally biased toward gly residues. Disordered stretches follow at residues 16–41 (RGGG…TSGS) and 158–186 (MSSS…SCSS). Residues 174–186 (ASSSHPPGSSCSS) are compositionally biased toward low complexity. Kelch repeat units lie at residues 263–312 (AMFV…VAGS), 314–369 (MFIF…VYDN), 370–417 (KMWI…PVAV), 421–467 (AMYV…PSRR), 478–524 (FLYV…FHAS), and 530–581 (AMYI…FIVG). 2 BTB domains span residues 574 to 670 (CDIQ…DLKD) and 801 to 870 (CDIS…KMPP).

This sequence belongs to the LZTR1 family. In terms of assembly, component of some BCR (BTB-CUL3-RBX1) E3 ubiquitin-protein ligase complex. As to expression, expressed in Rdl-expressing neurons of the mushroom body, the neurons projecting to the LC9 optic glomerulus and in a neuronal cluster near the subesophageal ganglion (at protein level).

Its pathway is protein modification; protein ubiquitination. Inhibitor of Ras signaling. Acts as a substrate-specific adapter of a BCR (BTB-CUL3-RBX1) E3 ubiquitin-protein ligase complex that mediates ubiquitination of Ras. Together with Nf1, plays an important role for normal sleep behavior, mainly during the night. Might affect sleep by modulating GABA signaling in Rdl-expressing neurons. Might play a role in the regulation of brain glycogen metabolism and organismal levels of triglycerides. The polypeptide is Leucine-zipper-like transcriptional regulator 1 homolog (Drosophila melanogaster (Fruit fly)).